The sequence spans 494 residues: Membrane-bound lytic murein transglycosylase F (494 aa).

The N-terminal stretch at 1–20 (MIKYLYVILLGLLLSGCQPA) is a signal peptide. Positions 21 to 259 (EVVEIEASPK…HLNEKYFGHV (239 aa)) are non-LT domain. Residues 260–494 (KRFDYVDTRA…LKPKLGAGQP (235 aa)) are LT domain. E304 is an active-site residue. Over residues 473 to 485 (QSLASDSKTNNTL) the composition is skewed to polar residues. Residues 473 to 494 (QSLASDSKTNNTLKPKLGAGQP) are disordered.

The protein in the N-terminal section; belongs to the bacterial solute-binding protein 3 family. It in the C-terminal section; belongs to the transglycosylase Slt family.

The protein resides in the cell outer membrane. It carries out the reaction Exolytic cleavage of the (1-&gt;4)-beta-glycosidic linkage between N-acetylmuramic acid (MurNAc) and N-acetylglucosamine (GlcNAc) residues in peptidoglycan, from either the reducing or the non-reducing ends of the peptidoglycan chains, with concomitant formation of a 1,6-anhydrobond in the MurNAc residue.. Functionally, murein-degrading enzyme that degrades murein glycan strands and insoluble, high-molecular weight murein sacculi, with the concomitant formation of a 1,6-anhydromuramoyl product. Lytic transglycosylases (LTs) play an integral role in the metabolism of the peptidoglycan (PG) sacculus. Their lytic action creates space within the PG sacculus to allow for its expansion as well as for the insertion of various structures such as secretion systems and flagella. This Shewanella denitrificans (strain OS217 / ATCC BAA-1090 / DSM 15013) protein is Membrane-bound lytic murein transglycosylase F.